The sequence spans 1119 residues: DNA-directed RNA polymerase D subunit 2b (1119 aa).

Asp-732 contributes to the Mg(2+) binding site. Residues Cys-1055, Cys-1058, Cys-1080, and Cys-1083 each contribute to the Zn(2+) site. The C4-type zinc-finger motif lies at 1055–1083 (CRKCKTYANVIERTPSSGRKIRGPYCRVC).

This sequence belongs to the RNA polymerase beta chain family. As to quaternary structure, component of the RNA polymerase IVa and IVb (Pol IV) complexes.

Its subcellular location is the nucleus. It carries out the reaction RNA(n) + a ribonucleoside 5'-triphosphate = RNA(n+1) + diphosphate. In terms of biological role, DNA-dependent RNA polymerase catalyzes the transcription of DNA into RNA using the four ribonucleoside triphosphates as substrates. Second largest component of RNA polymerase IVa and IVb which mediate short-interfering RNAs (siRNA) accumulation and subsequent RNA-directed DNA methylation-dependent (RdDM) silencing of endogenous repeated sequences, including transposable largest subunit. Also required for full erasure of methylation elements. Required for intercellular RNA interference (RNAi) leading to systemic post-transcriptional gene silencing. The chain is DNA-directed RNA polymerase D subunit 2b (NRPD2b) from Arabidopsis thaliana (Mouse-ear cress).